We begin with the raw amino-acid sequence, 183 residues long: Adenine phosphoribosyltransferase (183 aa).

It belongs to the purine/pyrimidine phosphoribosyltransferase family. As to quaternary structure, homodimer.

It localises to the cytoplasm. It carries out the reaction AMP + diphosphate = 5-phospho-alpha-D-ribose 1-diphosphate + adenine. Its pathway is purine metabolism; AMP biosynthesis via salvage pathway; AMP from adenine: step 1/1. Its function is as follows. Catalyzes a salvage reaction resulting in the formation of AMP, that is energically less costly than de novo synthesis. The polypeptide is Adenine phosphoribosyltransferase (Escherichia coli (strain K12 / MC4100 / BW2952)).